The sequence spans 120 residues: Large ribosomal subunit protein bL19 (120 aa).

The protein belongs to the bacterial ribosomal protein bL19 family.

Functionally, this protein is located at the 30S-50S ribosomal subunit interface and may play a role in the structure and function of the aminoacyl-tRNA binding site. In Thermosynechococcus vestitus (strain NIES-2133 / IAM M-273 / BP-1), this protein is Large ribosomal subunit protein bL19.